A 187-amino-acid polypeptide reads, in one-letter code: Homeobox protein engrailed-like ceh-16 (187 aa).

Disordered regions lie at residues Pro-14–Pro-43, Ser-60–Asp-100, and Lys-144–Ile-167. A compositionally biased stretch (low complexity) spans Pro-20–Pro-39. Residues Glu-87–Thr-146 constitute a DNA-binding region (homeobox). Residues Ser-145–Asn-163 show a composition bias toward polar residues.

This sequence belongs to the engrailed homeobox family. As to expression, expressed in seam cells.

It localises to the nucleus. It is found in the cytoplasm. Its function is as follows. Transcriptional regulator which binds to DNA to regulate gene expression and promote seam cell development and differentiation during embryogenesis. Plays a role in maintaining the boundaries between the lateral rows of seam cells and the ventral and dorsal row of epidermal cells during embryonic development. Negatively regulates the expression of the fusion effector protein eff-1 to prevent seam cell fusion with the dorsal and ventral epidermal cells during embryonic elongation. Positively regulates seam cell self-renewal and expansion during the L2 larval stage to promote seam cell development. This role does not seem to be via regulation of eff-1 expression. Specifically, it is required for the asymmetric division of the V5.p seam cell during the L2 larval stage, and in turn the asymmetric nuclear distribution of pop-1 in V5.p daughter cells. This Caenorhabditis elegans protein is Homeobox protein engrailed-like ceh-16.